Here is a 364-residue protein sequence, read N- to C-terminus: Peptide chain release factor 2 (364 aa).

Position 252 is an N5-methylglutamine (Q252).

Belongs to the prokaryotic/mitochondrial release factor family. Methylated by PrmC. Methylation increases the termination efficiency of RF2.

It is found in the cytoplasm. Its function is as follows. Peptide chain release factor 2 directs the termination of translation in response to the peptide chain termination codons UGA and UAA. The chain is Peptide chain release factor 2 from Clostridium perfringens (strain SM101 / Type A).